The following is a 265-amino-acid chain: tRNA pseudouridine synthase A (265 aa).

D53 serves as the catalytic Nucleophile. Residue Y111 participates in substrate binding.

Belongs to the tRNA pseudouridine synthase TruA family. In terms of assembly, homodimer.

It catalyses the reaction uridine(38/39/40) in tRNA = pseudouridine(38/39/40) in tRNA. Functionally, formation of pseudouridine at positions 38, 39 and 40 in the anticodon stem and loop of transfer RNAs. The polypeptide is tRNA pseudouridine synthase A (Acinetobacter baumannii (strain SDF)).